The following is a 294-amino-acid chain: Elongation factor Ts (294 aa).

The tract at residues 80-83 (TDFV) is involved in Mg(2+) ion dislocation from EF-Tu.

It belongs to the EF-Ts family.

It is found in the cytoplasm. Its function is as follows. Associates with the EF-Tu.GDP complex and induces the exchange of GDP to GTP. It remains bound to the aminoacyl-tRNA.EF-Tu.GTP complex up to the GTP hydrolysis stage on the ribosome. The sequence is that of Elongation factor Ts from Listeria innocua serovar 6a (strain ATCC BAA-680 / CLIP 11262).